We begin with the raw amino-acid sequence, 65 residues long: Beta-defensin 106A (65 aa).

The first 20 residues, 1–20, serve as a signal peptide directing secretion; the sequence is MRTFLFLFVVLFFLTPAKNA. 3 disulfides stabilise this stretch: Cys-26/Cys-53, Cys-33/Cys-47, and Cys-37/Cys-54.

This sequence belongs to the beta-defensin family. Monomer. Interacts with CCR2 (via extracellular N-terminal region); this interaction may preferentially require specific tyrosine sulfation on CCR2.

Its subcellular location is the secreted. It is found in the membrane. Functionally, has antibacterial activity. Acts as a ligand for C-C chemokine receptor CCR2. The sequence is that of Beta-defensin 106A (DEFB106A) from Hylobates lar (Lar gibbon).